The chain runs to 448 residues: 26S proteasome regulatory subunit 4 homolog (448 aa).

Residues 1 to 10 show a composition bias toward polar residues; that stretch reads MGQAQSGNFS. The interval 1–58 is disordered; the sequence is MGQAQSGNFSNFGDGANGDNKKDQKKDKPKYEPPVPTRTGRRKKKAQSGPDASAKLPT. Positions 19 to 31 are enriched in basic and acidic residues; that stretch reads DNKKDQKKDKPKY. 232–239 provides a ligand contact to ATP; the sequence is GAPGTGKT.

Belongs to the AAA ATPase family.

It is found in the cytoplasm. The protein resides in the nucleus. Functionally, the 26S proteasome is involved in the ATP-dependent degradation of ubiquitinated proteins. The regulatory (or ATPase) complex confers ATP dependency and substrate specificity to the 26S complex. This chain is 26S proteasome regulatory subunit 4 homolog (mts2), found in Schizosaccharomyces pombe (strain 972 / ATCC 24843) (Fission yeast).